We begin with the raw amino-acid sequence, 212 residues long: Thiamine-phosphate synthase (212 aa).

4-amino-2-methyl-5-(diphosphooxymethyl)pyrimidine-binding positions include 40 to 44 and N75; that span reads QFREK. Positions 76 and 95 each coordinate Mg(2+). Residue S113 participates in 4-amino-2-methyl-5-(diphosphooxymethyl)pyrimidine binding. 139-141 is a 2-[(2R,5Z)-2-carboxy-4-methylthiazol-5(2H)-ylidene]ethyl phosphate binding site; sequence TIS. K142 contributes to the 4-amino-2-methyl-5-(diphosphooxymethyl)pyrimidine binding site. Residues G171 and 191–192 contribute to the 2-[(2R,5Z)-2-carboxy-4-methylthiazol-5(2H)-ylidene]ethyl phosphate site; that span reads IS.

It belongs to the thiamine-phosphate synthase family. The cofactor is Mg(2+).

The catalysed reaction is 2-[(2R,5Z)-2-carboxy-4-methylthiazol-5(2H)-ylidene]ethyl phosphate + 4-amino-2-methyl-5-(diphosphooxymethyl)pyrimidine + 2 H(+) = thiamine phosphate + CO2 + diphosphate. It catalyses the reaction 2-(2-carboxy-4-methylthiazol-5-yl)ethyl phosphate + 4-amino-2-methyl-5-(diphosphooxymethyl)pyrimidine + 2 H(+) = thiamine phosphate + CO2 + diphosphate. The enzyme catalyses 4-methyl-5-(2-phosphooxyethyl)-thiazole + 4-amino-2-methyl-5-(diphosphooxymethyl)pyrimidine + H(+) = thiamine phosphate + diphosphate. The protein operates within cofactor biosynthesis; thiamine diphosphate biosynthesis; thiamine phosphate from 4-amino-2-methyl-5-diphosphomethylpyrimidine and 4-methyl-5-(2-phosphoethyl)-thiazole: step 1/1. Condenses 4-methyl-5-(beta-hydroxyethyl)thiazole monophosphate (THZ-P) and 2-methyl-4-amino-5-hydroxymethyl pyrimidine pyrophosphate (HMP-PP) to form thiamine monophosphate (TMP). This is Thiamine-phosphate synthase from Staphylococcus haemolyticus (strain JCSC1435).